The sequence spans 101 residues: NAD(P)H-quinone oxidoreductase subunit 4L, chloroplastic (101 aa).

3 consecutive transmembrane segments (helical) span residues 2-22 (MLEYVLGLSAYLFSIGIYGLI), 32-52 (MCLELILNAVNLNFVTFSDFF), and 61-81 (ILSIFVISIAAAEAAIGPAIV).

It belongs to the complex I subunit 4L family. NDH is composed of at least 16 different subunits, 5 of which are encoded in the nucleus.

It is found in the plastid. Its subcellular location is the chloroplast thylakoid membrane. It carries out the reaction a plastoquinone + NADH + (n+1) H(+)(in) = a plastoquinol + NAD(+) + n H(+)(out). It catalyses the reaction a plastoquinone + NADPH + (n+1) H(+)(in) = a plastoquinol + NADP(+) + n H(+)(out). Functionally, NDH shuttles electrons from NAD(P)H:plastoquinone, via FMN and iron-sulfur (Fe-S) centers, to quinones in the photosynthetic chain and possibly in a chloroplast respiratory chain. The immediate electron acceptor for the enzyme in this species is believed to be plastoquinone. Couples the redox reaction to proton translocation, and thus conserves the redox energy in a proton gradient. This Populus alba (White poplar) protein is NAD(P)H-quinone oxidoreductase subunit 4L, chloroplastic.